A 193-amino-acid chain; its full sequence is Glycerol-3-phosphate acyltransferase (193 aa).

4 helical membrane-spanning segments follow: residues L2–V22, V76–F96, L112–F132, and C152–I172.

This sequence belongs to the PlsY family. Probably interacts with PlsX.

The protein localises to the cell membrane. It carries out the reaction an acyl phosphate + sn-glycerol 3-phosphate = a 1-acyl-sn-glycero-3-phosphate + phosphate. Its pathway is lipid metabolism; phospholipid metabolism. Its function is as follows. Catalyzes the transfer of an acyl group from acyl-phosphate (acyl-PO(4)) to glycerol-3-phosphate (G3P) to form lysophosphatidic acid (LPA). This enzyme utilizes acyl-phosphate as fatty acyl donor, but not acyl-CoA or acyl-ACP. In Bacillus velezensis (strain DSM 23117 / BGSC 10A6 / LMG 26770 / FZB42) (Bacillus amyloliquefaciens subsp. plantarum), this protein is Glycerol-3-phosphate acyltransferase.